The chain runs to 273 residues: Dermonecrotic toxin LhSicTox-alphaIA2bvi (273 aa).

His5 is an active-site residue. The Mg(2+) site is built by Glu25 and Asp27. His41 functions as the Nucleophile in the catalytic mechanism. Intrachain disulfides connect Cys45-Cys51 and Cys47-Cys190. Asp85 contacts Mg(2+).

Belongs to the arthropod phospholipase D family. Class II subfamily. The cofactor is Mg(2+). Expressed by the venom gland.

It localises to the secreted. It carries out the reaction an N-(acyl)-sphingosylphosphocholine = an N-(acyl)-sphingosyl-1,3-cyclic phosphate + choline. It catalyses the reaction an N-(acyl)-sphingosylphosphoethanolamine = an N-(acyl)-sphingosyl-1,3-cyclic phosphate + ethanolamine. The enzyme catalyses a 1-acyl-sn-glycero-3-phosphocholine = a 1-acyl-sn-glycero-2,3-cyclic phosphate + choline. The catalysed reaction is a 1-acyl-sn-glycero-3-phosphoethanolamine = a 1-acyl-sn-glycero-2,3-cyclic phosphate + ethanolamine. Dermonecrotic toxins cleave the phosphodiester linkage between the phosphate and headgroup of certain phospholipids (sphingolipid and lysolipid substrates), forming an alcohol (often choline) and a cyclic phosphate. This toxin acts on sphingomyelin (SM). It may also act on ceramide phosphoethanolamine (CPE), lysophosphatidylcholine (LPC) and lysophosphatidylethanolamine (LPE), but not on lysophosphatidylserine (LPS), and lysophosphatidylglycerol (LPG). It acts by transphosphatidylation, releasing exclusively cyclic phosphate products as second products. Induces dermonecrosis, hemolysis, increased vascular permeability, edema, inflammatory response, and platelet aggregation. The protein is Dermonecrotic toxin LhSicTox-alphaIA2bvi of Loxosceles hirsuta (Recluse spider).